The primary structure comprises 197 residues: GTP cyclohydrolase-2 (197 aa).

Arginine 50 to glutamate 54 contributes to the GTP binding site. Residues cysteine 55, cysteine 66, and cysteine 68 each contribute to the Zn(2+) site. Residues glutamine 71, glutamate 93–arginine 95, and threonine 115 each bind GTP. Catalysis depends on aspartate 127, which acts as the Proton acceptor. Arginine 129 serves as the catalytic Nucleophile. Threonine 150 and lysine 155 together coordinate GTP.

This sequence belongs to the GTP cyclohydrolase II family. Requires Zn(2+) as cofactor.

The catalysed reaction is GTP + 4 H2O = 2,5-diamino-6-hydroxy-4-(5-phosphoribosylamino)-pyrimidine + formate + 2 phosphate + 3 H(+). It participates in cofactor biosynthesis; riboflavin biosynthesis; 5-amino-6-(D-ribitylamino)uracil from GTP: step 1/4. Functionally, catalyzes the conversion of GTP to 2,5-diamino-6-ribosylamino-4(3H)-pyrimidinone 5'-phosphate (DARP), formate and pyrophosphate. This Neisseria meningitidis serogroup C (strain 053442) protein is GTP cyclohydrolase-2.